Here is an 89-residue protein sequence, read N- to C-terminus: Large ribosomal subunit protein bL27 (89 aa).

The protein belongs to the bacterial ribosomal protein bL27 family.

The protein is Large ribosomal subunit protein bL27 of Bacteroides fragilis (strain ATCC 25285 / DSM 2151 / CCUG 4856 / JCM 11019 / LMG 10263 / NCTC 9343 / Onslow / VPI 2553 / EN-2).